Here is a 68-residue protein sequence, read N- to C-terminus: Tabimmunregulin 1 (68 aa).

The first 26 residues, 1–26, serve as a signal peptide directing secretion; it reads MLLKSYVFFLLSLLIVGLFTSRDADA. Residues 27–38 constitute a propeptide that is removed on maturation; it reads QYEDLVTGYLRK.

In terms of tissue distribution, expressed in salivary glands.

The protein resides in the secreted. Functionally, horsefly salivary gland immunosuppressant protein that likely inhibits the host inflammatory response by regulation of anti- and pro-inflammatory cytokines. When tested on mouse splenocytes in the presence of LPS, it increases the secretion of the proinflammatory cytokine interleukin-10 (IL10) and decreases the secretion of the proinflammatory cytokine interferon-gamma (IFNG) in a dose-dependent manner. The sequence is that of Tabimmunregulin 1 from Tabanus yao (Horsefly).